The following is a 440-amino-acid chain: L-seryl-tRNA(Sec) selenium transferase (440 aa).

An N6-(pyridoxal phosphate)lysine modification is found at lysine 282.

Belongs to the SelA family. Requires pyridoxal 5'-phosphate as cofactor.

Its subcellular location is the cytoplasm. It catalyses the reaction L-seryl-tRNA(Sec) + selenophosphate + H(+) = L-selenocysteinyl-tRNA(Sec) + phosphate. The protein operates within aminoacyl-tRNA biosynthesis; selenocysteinyl-tRNA(Sec) biosynthesis; selenocysteinyl-tRNA(Sec) from L-seryl-tRNA(Sec) (bacterial route): step 1/1. In terms of biological role, converts seryl-tRNA(Sec) to selenocysteinyl-tRNA(Sec) required for selenoprotein biosynthesis. The protein is L-seryl-tRNA(Sec) selenium transferase of Campylobacter jejuni (strain RM1221).